The chain runs to 629 residues: Plastin-1 (629 aa).

Methionine 1 is modified (N-acetylmethionine). EF-hand domains lie at 11–46 and 51–86; these read EELE…ASLP and KVRE…LKSK. Ca(2+)-binding residues include aspartate 24, aspartate 26, serine 28, tyrosine 30, glutamate 35, aspartate 64, asparagine 66, aspartate 68, lysine 70, and glutamate 75. Actin-binding regions lie at residues 108 to 380 and 381 to 625; these read TSTI…CLHK and PNNN…GKGL. 4 consecutive Calponin-homology (CH) domains span residues 122–238, 266–376, 395–504, and 516–625; these read EEEK…KVGL, LSPE…NTYP, SKEE…RRYT, and KVND…GKGL.

In terms of assembly, monomer. In terms of processing, phosphorylated. In terms of tissue distribution, in small intestine, colon, and kidney; relatively lower levels of expression are detected in the lung and stomach.

Its subcellular location is the cytoplasm. It is found in the cell projection. It localises to the stereocilium. Actin-bundling protein. In the inner ear, it is required for stereocilia formation. Mediates liquid packing of actin filaments that is necessary for stereocilia to grow to their proper dimensions. In Homo sapiens (Human), this protein is Plastin-1 (PLS1).